A 242-amino-acid chain; its full sequence is UPF0246 protein SPN23F15130 (242 aa).

It belongs to the UPF0246 family.

The chain is UPF0246 protein SPN23F15130 from Streptococcus pneumoniae (strain ATCC 700669 / Spain 23F-1).